Reading from the N-terminus, the 229-residue chain is Small ribosomal subunit protein uS3 (229 aa).

Residues 39–107 (VRQYLTEKLK…TAQINIAEIR (69 aa)) form the KH type-2 domain.

Belongs to the universal ribosomal protein uS3 family. As to quaternary structure, part of the 30S ribosomal subunit. Forms a tight complex with proteins S10 and S14.

Its function is as follows. Binds the lower part of the 30S subunit head. Binds mRNA in the 70S ribosome, positioning it for translation. The chain is Small ribosomal subunit protein uS3 from Shewanella frigidimarina (strain NCIMB 400).